A 799-amino-acid chain; its full sequence is Ribosome-releasing factor 2, mitochondrial (799 aa).

One can recognise a tr-type G domain in the interval 19-306 (SKIRNIGIIA…AVVNYLPSPL (288 aa)). Residues 28–35 (AHIDAGKT), 93–97 (DTPGH), and 145–148 (NKMD) contribute to the GTP site.

It belongs to the TRAFAC class translation factor GTPase superfamily. Classic translation factor GTPase family. EF-G/EF-2 subfamily.

The protein resides in the mitochondrion. Its function is as follows. Mitochondrial GTPase that mediates the disassembly of ribosomes from messenger RNA at the termination of mitochondrial protein biosynthesis. Not involved in the GTP-dependent ribosomal translocation step during translation elongation. In Vanderwaltozyma polyspora (strain ATCC 22028 / DSM 70294 / BCRC 21397 / CBS 2163 / NBRC 10782 / NRRL Y-8283 / UCD 57-17) (Kluyveromyces polysporus), this protein is Ribosome-releasing factor 2, mitochondrial.